The chain runs to 369 residues: ATP-dependent (S)-NAD(P)H-hydrate dehydratase (369 aa).

The YjeF C-terminal domain maps to 14–356 (LFQKARKLVP…DEVHESFLTL (343 aa)). (6S)-NADPHX contacts are provided by residues glycine 126 and 179–185 (NVNEFSR). ATP-binding positions include 231 to 235 (KGPHD) and 250 to 259 (GGLKRSGGQG). Residue aspartate 260 participates in (6S)-NADPHX binding. The span at 284-306 (GEQEHSKEAENKEEVQGELESNK) shows a compositional bias: basic and acidic residues. A disordered region spans residues 284 to 307 (GEQEHSKEAENKEEVQGELESNKR).

It belongs to the NnrD/CARKD family. Mg(2+) is required as a cofactor.

The protein localises to the cytoplasm. It carries out the reaction (6S)-NADHX + ATP = ADP + phosphate + NADH + H(+). The enzyme catalyses (6S)-NADPHX + ATP = ADP + phosphate + NADPH + H(+). Its function is as follows. Catalyzes the dehydration of the S-form of NAD(P)HX at the expense of ATP, which is converted to ADP. Together with NAD(P)HX epimerase, which catalyzes the epimerization of the S- and R-forms, the enzyme allows the repair of both epimers of NAD(P)HX, a damaged form of NAD(P)H that is a result of enzymatic or heat-dependent hydration. The chain is ATP-dependent (S)-NAD(P)H-hydrate dehydratase from Emericella nidulans (strain FGSC A4 / ATCC 38163 / CBS 112.46 / NRRL 194 / M139) (Aspergillus nidulans).